A 309-amino-acid chain; its full sequence is Methionyl-tRNA formyltransferase (309 aa).

Residue 109 to 112 (SLLP) coordinates (6S)-5,6,7,8-tetrahydrofolate.

This sequence belongs to the Fmt family.

It carries out the reaction L-methionyl-tRNA(fMet) + (6R)-10-formyltetrahydrofolate = N-formyl-L-methionyl-tRNA(fMet) + (6S)-5,6,7,8-tetrahydrofolate + H(+). Attaches a formyl group to the free amino group of methionyl-tRNA(fMet). The formyl group appears to play a dual role in the initiator identity of N-formylmethionyl-tRNA by promoting its recognition by IF2 and preventing the misappropriation of this tRNA by the elongation apparatus. The polypeptide is Methionyl-tRNA formyltransferase (Clostridioides difficile (strain 630) (Peptoclostridium difficile)).